Reading from the N-terminus, the 265-residue chain is Small ribosomal subunit protein uS3 (265 aa).

One can recognise a KH type-2 domain in the interval 39-107; it reads VREFLKKKLK…PVHVNIEEIR (69 aa). Residues 211–265 form a disordered region; that stretch reads NDAPVVEEPQEDRRRRPGRPEGRRREGEGRPAGNRRGGAGAGRRAAPGADAKSGE. A compositionally biased stretch (basic and acidic residues) spans 221–239; it reads EDRRRRPGRPEGRRREGEG.

It belongs to the universal ribosomal protein uS3 family. Part of the 30S ribosomal subunit. Forms a tight complex with proteins S10 and S14.

Its function is as follows. Binds the lower part of the 30S subunit head. Binds mRNA in the 70S ribosome, positioning it for translation. The polypeptide is Small ribosomal subunit protein uS3 (Cupriavidus metallidurans (strain ATCC 43123 / DSM 2839 / NBRC 102507 / CH34) (Ralstonia metallidurans)).